A 230-amino-acid chain; its full sequence is Sugar fermentation stimulation protein homolog (230 aa).

This sequence belongs to the SfsA family.

The polypeptide is Sugar fermentation stimulation protein homolog (Clostridium tetani (strain Massachusetts / E88)).